A 209-amino-acid chain; its full sequence is Probable phosphatidylglycerophosphate synthase (209 aa).

4 helical membrane-spanning segments follow: residues 32–52, 105–125, 147–167, and 171–191; these read ILTL…FYGG, ALIG…LILT, WGGK…VLPL, and LHVA…ITGV.

Belongs to the CDP-alcohol phosphatidyltransferase class-I family.

The protein resides in the cell membrane. The catalysed reaction is a CDP-1,2-diacyl-sn-glycerol + sn-glycerol 3-phosphate = a 1,2-diacyl-sn-glycero-3-phospho-(1'-sn-glycero-3'-phosphate) + CMP + H(+). The protein operates within lipid metabolism; phospholipid metabolism. Probably catalyzes the synthesis of phosphatidylglycerophosphate by transferring a phosphatidyl group from CDP-diacylglycerol to glycerol 3-phosphate. This is Probable phosphatidylglycerophosphate synthase from Mycobacterium tuberculosis (strain CDC 1551 / Oshkosh).